A 176-amino-acid chain; its full sequence is 2-C-methyl-D-erythritol 2,4-cyclodiphosphate synthase (176 aa).

A divalent metal cation-binding residues include aspartate 22 and histidine 24. 4-CDP-2-C-methyl-D-erythritol 2-phosphate-binding positions include 22–24 (DVH) and 48–49 (HS). Residue histidine 56 coordinates a divalent metal cation. 4-CDP-2-C-methyl-D-erythritol 2-phosphate contacts are provided by residues 70 to 72 (DIG), 146 to 149 (TTSE), phenylalanine 153, and arginine 156.

It belongs to the IspF family. As to quaternary structure, homotrimer. A divalent metal cation is required as a cofactor.

The enzyme catalyses 4-CDP-2-C-methyl-D-erythritol 2-phosphate = 2-C-methyl-D-erythritol 2,4-cyclic diphosphate + CMP. Its pathway is isoprenoid biosynthesis; isopentenyl diphosphate biosynthesis via DXP pathway; isopentenyl diphosphate from 1-deoxy-D-xylulose 5-phosphate: step 4/6. Involved in the biosynthesis of isopentenyl diphosphate (IPP) and dimethylallyl diphosphate (DMAPP), two major building blocks of isoprenoid compounds. Catalyzes the conversion of 4-diphosphocytidyl-2-C-methyl-D-erythritol 2-phosphate (CDP-ME2P) to 2-C-methyl-D-erythritol 2,4-cyclodiphosphate (ME-CPP) with a corresponding release of cytidine 5-monophosphate (CMP). The sequence is that of 2-C-methyl-D-erythritol 2,4-cyclodiphosphate synthase from Xylella fastidiosa (strain 9a5c).